Consider the following 378-residue polypeptide: TelA-like protein SAV1406 (378 aa).

Belongs to the TelA family.

The polypeptide is TelA-like protein SAV1406 (Staphylococcus aureus (strain Mu50 / ATCC 700699)).